A 449-amino-acid polypeptide reads, in one-letter code: Putative tartrate transporter (449 aa).

A run of 11 helical transmembrane segments spans residues isoleucine 34 to phenylalanine 54, glycine 64 to phenylalanine 84, isoleucine 99 to glutamine 119, leucine 130 to phenylalanine 150, alanine 156 to isoleucine 176, tryptophan 194 to leucine 214, valine 259 to tryptophan 279, isoleucine 292 to tryptophan 312, glycine 336 to valine 356, leucine 367 to isoleucine 387, and glycine 414 to alanine 434.

This sequence belongs to the major facilitator superfamily. Phthalate permease family.

The protein resides in the cell membrane. Component of the tartrate utilization system and may allow entry of tartrate and tartrate dehydrogenase. The chain is Putative tartrate transporter (ttuB) from Agrobacterium vitis (Rhizobium vitis).